Consider the following 430-residue polypeptide: Histidine--tRNA ligase (430 aa).

Belongs to the class-II aminoacyl-tRNA synthetase family. As to quaternary structure, homodimer.

Its subcellular location is the cytoplasm. It carries out the reaction tRNA(His) + L-histidine + ATP = L-histidyl-tRNA(His) + AMP + diphosphate + H(+). This chain is Histidine--tRNA ligase, found in Synechococcus sp. (strain CC9902).